The sequence spans 275 residues: MASLQTQMISFYAIFLSILLTTILFFKVNSTETTSFLITKFSPDQQNLIFQGDGYTTKEKLTLTKAVKNTVGRALYSSPIHIWDRETGNVANFVTSFTFVINAPNSYNVADGFTFFIAPVDTKPQTGGGYLGVFNSAEYDKTTQTVAVEFDTFYNAAWDPSNRDRHIGIDVNSIKSVNTKSWKLQNGEEANVVIAFNAATNVLTVSLTYPNSLEEENVTSYTLSDVVSLKDVVPEWVRIGFSATTGAEYAAHEVLSWSFHSELSGTSSSKQAADA.

The N-terminal stretch at 1-30 is a signal peptide; sequence MASLQTQMISFYAIFLSILLTTILFFKVNS. Mn(2+) is bound by residues Glu-149 and Asp-151. 4 residues coordinate Ca(2+): Asp-151, Phe-153, Asn-155, and Asp-159. Mn(2+)-binding residues include Asp-159 and His-166. The N-linked (GlcNAc...) asparagine glycan is linked to Asn-217.

Belongs to the leguminous lectin family. As to quaternary structure, tetramer of two alpha and two beta chains.

In terms of biological role, D-mannose specific lectin. The sequence is that of Lectin (LECA) from Pisum sativum (Garden pea).